A 203-amino-acid chain; its full sequence is MTQYTFKPKDFKAFEVEGLDARMEALNEYVRPQLNQLGDYFSEYFTSQTGETFYAHVAKHARRSVNPPVDTWVAFAPNKRGYKMLPHFQIGLFKDHLFLMFGVMHEGKDKAERVKVFDKHFDVLKQLPEDYQVSLDHMKPEKSYIKDLSDDELHKAIDRVKNVKKGEFFVARSLSPKDAELKSDKAFLSFVKETFDEFLKFYE.

Belongs to the UPF0637 family.

This is UPF0637 protein SH1846 from Staphylococcus haemolyticus (strain JCSC1435).